Consider the following 475-residue polypeptide: ATP-dependent protease ATPase subunit HslU1 (475 aa).

The transit peptide at 1–27 (MMRRVTSSLPSALKLGRSLGPNVRFSG) directs the protein to the mitochondrion. ATP contacts are provided by residues isoleucine 66, 108–113 (GVGKTE), aspartate 286, glutamate 353, and arginine 425.

The protein belongs to the ClpX chaperone family. HslU subfamily. As to quaternary structure, a double ring-shaped homohexamer of HslV is capped on each side by a ring-shaped HslU homohexamer. The assembly of the HslU/HslV complex (HslVU) is dependent on binding of ATP.

It localises to the mitochondrion matrix. Its subcellular location is the kinetoplast. ATPase subunit of a proteasome-like degradation complex; this subunit has chaperone activity. The binding of ATP and its subsequent hydrolysis by HslU are essential for unfolding of protein substrates subsequently hydrolyzed by HslV. HslU recognizes the N-terminal part of its protein substrates and unfolds these before they are guided to HslV for hydrolysis. The HslVU protease complex functions in mitochondrial DNA replication by regulating DNA helicase PIF2 protein levels. In Trypanosoma brucei brucei (strain 927/4 GUTat10.1), this protein is ATP-dependent protease ATPase subunit HslU1 (HslU1).